The chain runs to 323 residues: NADH-cytochrome b5 reductase 2 (323 aa).

Residues 32–48 (LAPIYLGVGLIGLGVGL) form a helical membrane-spanning segment. The region spanning 72 to 177 (QGWVDLKLAQ…KGPIPKYPWE (106 aa)) is the FAD-binding FR-type domain. An FAD-binding site is contributed by 180 to 215 (KHKHICLIAGGTGITPMYQLARKIFKDPEDQTKVTL).

The protein belongs to the flavoprotein pyridine nucleotide cytochrome reductase family. FAD serves as cofactor.

It localises to the mitochondrion outer membrane. The catalysed reaction is 2 Fe(III)-[cytochrome b5] + NADH = 2 Fe(II)-[cytochrome b5] + NAD(+) + H(+). Functionally, may mediate the reduction of outer membrane cytochrome b5. The chain is NADH-cytochrome b5 reductase 2 (mcr1) from Aspergillus fumigatus (strain ATCC MYA-4609 / CBS 101355 / FGSC A1100 / Af293) (Neosartorya fumigata).